A 338-amino-acid chain; its full sequence is Ornithine carbamoyltransferase, catabolic (338 aa).

Residues 58-61 (STRT), Gln-85, Arg-109, and 136-139 (HPTQ) each bind carbamoyl phosphate. L-ornithine contacts are provided by residues Asn-168, Asp-232, and 236–237 (SM). Carbamoyl phosphate-binding positions include 273–274 (CL) and Arg-318.

Belongs to the aspartate/ornithine carbamoyltransferase superfamily. OTCase family.

It is found in the cytoplasm. It carries out the reaction carbamoyl phosphate + L-ornithine = L-citrulline + phosphate + H(+). It participates in amino-acid degradation; L-arginine degradation via ADI pathway; carbamoyl phosphate from L-arginine: step 2/2. Functionally, reversibly catalyzes the transfer of the carbamoyl group from carbamoyl phosphate (CP) to the N(epsilon) atom of ornithine (ORN) to produce L-citrulline. The polypeptide is Ornithine carbamoyltransferase, catabolic (Streptococcus pneumoniae serotype 4 (strain ATCC BAA-334 / TIGR4)).